A 741-amino-acid chain; its full sequence is uncharacterized protein (741 aa).

The stretch at 64 to 103 forms a coiled coil; that stretch reads VETLLCMLEQLTIRIEFLTKEIAQQEAAYKDIQNTQKSLV. A compositionally biased stretch (polar residues) spans 137 to 155; the sequence is FERQNRTAPLQSKVTTASL. 3 disordered regions span residues 137 to 214, 280 to 318, and 330 to 364; these read FERQ…TGLP, RTYSSISSSSSPFKKKTQSHLPNRTTEVPSISKQLSKSS, and SVSSVTKSPSPTPQSAPRAQSASTETAQDLDFLTP. Low complexity-rich tracts occupy residues 161-173 and 197-209; these read RTSMSSSPTASRT and KSKSVLPPSKSLA. Positions 298–308 are enriched in polar residues; that stretch reads SHLPNRTTEVP. 2 stretches are compositionally biased toward low complexity: residues 309–318 and 330–344; these read SISKQLSKSS and SVSSVTKSPSPTPQS. Residues 346–356 are compositionally biased toward polar residues; it reads PRAQSASTETA. An ATP-binding site is contributed by 499-506; sequence GPPGTGKT.

This sequence belongs to the AAA ATPase family.

The protein resides in the cytoplasm. Its subcellular location is the nucleus. This is an uncharacterized protein from Schizosaccharomyces pombe (strain 972 / ATCC 24843) (Fission yeast).